A 161-amino-acid chain; its full sequence is Regulator of ribonuclease activity A (161 aa).

Belongs to the RraA family. Homotrimer. Binds to both RNA-binding sites in the C-terminal region of Rne and to RhlB.

Its subcellular location is the cytoplasm. Its function is as follows. Globally modulates RNA abundance by binding to RNase E (Rne) and regulating its endonucleolytic activity. Can modulate Rne action in a substrate-dependent manner by altering the composition of the degradosome. Modulates RNA-binding and helicase activities of the degradosome. The protein is Regulator of ribonuclease activity A of Serratia proteamaculans (strain 568).